Reading from the N-terminus, the 141-residue chain is ATP synthase epsilon chain (141 aa).

The protein belongs to the ATPase epsilon chain family. As to quaternary structure, F-type ATPases have 2 components, CF(1) - the catalytic core - and CF(0) - the membrane proton channel. CF(1) has five subunits: alpha(3), beta(3), gamma(1), delta(1), epsilon(1). CF(0) has three main subunits: a, b and c.

It localises to the cell inner membrane. Functionally, produces ATP from ADP in the presence of a proton gradient across the membrane. This chain is ATP synthase epsilon chain, found in Paraburkholderia phytofirmans (strain DSM 17436 / LMG 22146 / PsJN) (Burkholderia phytofirmans).